The sequence spans 371 residues: Cathepsin L1 (371 aa).

An N-terminal signal peptide occupies residues 1–48; that stretch reads MNHLGVFETRFRPRTRHKSQRAQLIPEQITMRTAVLLPLLALLAVAQA. The propeptide at 49 to 153 is activation peptide; it reads VSFADVVMEE…VTFISPAHVT (105 aa). The N-linked (GlcNAc...) asparagine glycan is linked to Asn127. 3 disulfide bridges follow: Cys175–Cys218, Cys209–Cys251, and Cys310–Cys360. The active site involves Cys178. His317 is a catalytic residue. Positions 327 to 329 are excised as a propeptide; the sequence is DES. Asn338 is an active-site residue.

Belongs to the peptidase C1 family. Dimer of a heavy and a light chain linked by disulfide bonds. In terms of tissue distribution, in the embryo, predominantly expressed in the midgut. Also expressed in larval alimentary organs such as salivary gland and midgut including gastric caeca.

It localises to the lysosome. The enzyme catalyses Specificity close to that of papain. As compared to cathepsin B, cathepsin L exhibits higher activity toward protein substrates, but has little activity on Z-Arg-Arg-NHMec, and no peptidyl-dipeptidase activity.. Functionally, important for the overall degradation of proteins in lysosomes. Essential for adult male and female fertility. May play a role in digestion. The polypeptide is Cathepsin L1 (Drosophila melanogaster (Fruit fly)).